The sequence spans 225 residues: UPF0725 protein At5g63820 (225 aa).

This sequence belongs to the UPF0725 (EMB2204) family.

The polypeptide is UPF0725 protein At5g63820 (Arabidopsis thaliana (Mouse-ear cress)).